The chain runs to 1129 residues: Large proline-rich protein bag6 (1129 aa).

A Ubiquitin-like domain is found at Met1 to Thr76. 8 disordered regions span residues Val69–Asn108, Gln187–Glu235, Thr347–Pro402, Pro490–Ala518, Gly550–Ser606, Val654–Pro692, Val942–Ala967, and Val987–Ala1009. Low complexity predominate over residues Pro73–Pro105. 2 stretches are compositionally biased toward polar residues: residues Arg209–Ser232 and His364–Ser383. Composition is skewed to low complexity over residues Thr553–Pro593 and Pro655–Gln666. Pro residues predominate over residues Ala667–Ala686. Polar residues predominate over residues Glu947–Glu956.

In terms of assembly, component of the bag6/bat3 complex.

It is found in the cytoplasm. Its subcellular location is the cytosol. The protein resides in the nucleus. It localises to the secreted. The protein localises to the extracellular exosome. Its function is as follows. ATP-independent molecular chaperone preventing the aggregation of misfolded and hydrophobic patches-containing proteins. Functions as part of a cytosolic protein quality control complex, the bag6/bat3 complex, which maintains these client proteins in a soluble state and participates in their proper delivery to the endoplasmic reticulum or alternatively can promote their sorting to the proteasome where they undergo degradation. The bag6/bat3 complex is involved in the post-translational delivery of tail-anchored/type II transmembrane proteins to the endoplasmic reticulum membrane. Similarly, the bag6/bat3 complex also functions as a sorting platform for proteins of the secretory pathway that are mislocalized to the cytosol either delivering them to the proteasome for degradation or to the endoplasmic reticulum. The bag6/bat3 complex also plays a role in the endoplasmic reticulum-associated degradation (ERAD), a quality control mechanism that eliminates unwanted proteins of the endoplasmic reticulum through their retrotranslocation to the cytosol and their targeting to the proteasome. It maintains these retrotranslocated proteins in an unfolded yet soluble state condition in the cytosol to ensure their proper delivery to the proteasome. Also required for selective ubiquitin-mediated degradation of defective nascent chain polypeptides by the proteasome. Also involved in endoplasmic reticulum stress-induced pre-emptive quality control, a mechanism that selectively attenuates the translocation of newly synthesized proteins into the endoplasmic reticulum and reroutes them to the cytosol for proteasomal degradation. May ensure the proper degradation of these proteins and thereby protects the endoplasmic reticulum from protein overload upon stress. By stabilizing a large spectrum of proteins, may indirectly affect different biological processes including apoptosis. By controlling the steady-state expression of the IGF1R receptor, indirectly regulates the insulin-like growth factor receptor signaling pathway. When nuclear, may also act as a component of some chromatin regulator complex. The polypeptide is Large proline-rich protein bag6 (Xenopus tropicalis (Western clawed frog)).